The primary structure comprises 150 residues: Large ribosomal subunit protein bL9 (150 aa).

This sequence belongs to the bacterial ribosomal protein bL9 family.

Its function is as follows. Binds to the 23S rRNA. In Verminephrobacter eiseniae (strain EF01-2), this protein is Large ribosomal subunit protein bL9.